Reading from the N-terminus, the 333-residue chain is Ketol-acid reductoisomerase (NADP(+)) (333 aa).

The 171-residue stretch at 1–171 folds into the KARI N-terminal Rossmann domain; the sequence is MSNHTQPKIA…GGARANIIKT (171 aa). Residues 14 to 17, R37, T42, and 72 to 75 contribute to the NADP(+) site; these read YGSQ and DMVQ. H97 is a catalytic residue. NADP(+) is bound at residue G123. The region spanning 172-317 is the KARI C-terminal knotted domain; that stretch reads TFKEETETDL…KKLRAKMVWL (146 aa). Residues D180, E184, E216, and E220 each contribute to the Mg(2+) site. S241 contacts substrate.

It belongs to the ketol-acid reductoisomerase family. The cofactor is Mg(2+).

It catalyses the reaction (2R)-2,3-dihydroxy-3-methylbutanoate + NADP(+) = (2S)-2-acetolactate + NADPH + H(+). It carries out the reaction (2R,3R)-2,3-dihydroxy-3-methylpentanoate + NADP(+) = (S)-2-ethyl-2-hydroxy-3-oxobutanoate + NADPH + H(+). The protein operates within amino-acid biosynthesis; L-isoleucine biosynthesis; L-isoleucine from 2-oxobutanoate: step 2/4. It participates in amino-acid biosynthesis; L-valine biosynthesis; L-valine from pyruvate: step 2/4. Its function is as follows. Involved in the biosynthesis of branched-chain amino acids (BCAA). Catalyzes an alkyl-migration followed by a ketol-acid reduction of (S)-2-acetolactate (S2AL) to yield (R)-2,3-dihydroxy-isovalerate. In the isomerase reaction, S2AL is rearranged via a Mg-dependent methyl migration to produce 3-hydroxy-3-methyl-2-ketobutyrate (HMKB). In the reductase reaction, this 2-ketoacid undergoes a metal-dependent reduction by NADPH to yield (R)-2,3-dihydroxy-isovalerate. This Xanthomonas axonopodis pv. citri (strain 306) protein is Ketol-acid reductoisomerase (NADP(+)).